Here is a 462-residue protein sequence, read N- to C-terminus: Ribosomal oxygenase 2 (462 aa).

The interval 1 to 24 (MPKKARPAGDGKEQGPAPKQVKVE) is disordered. A JmjC domain is found at 139–271 (QPQRFKDELW…SSWGDFLLDT (133 aa)). The Fe cation site is built by H179, D181, and H240. A Phosphoserine modification is found at S308.

It belongs to the ROX family. MINA53 subfamily. The cofactor is Fe(2+).

It localises to the nucleus. The protein localises to the nucleolus. The catalysed reaction is L-histidyl-[ribosomal protein uL15] + 2-oxoglutarate + O2 = (3S)-3-hydroxy-L-histidyl-[ribosomal protein uL15] + succinate + CO2. It catalyses the reaction L-histidyl-[protein] + 2-oxoglutarate + O2 = (3S)-3-hydroxy-L-histidyl-[protein] + succinate + CO2. Its function is as follows. Oxygenase that can act as both a histone lysine demethylase and a ribosomal histidine hydroxylase. Is involved in the demethylation of trimethylated 'Lys-9' on histone H3 (H3K9me3), leading to an increase in ribosomal RNA expression. Also catalyzes the hydroxylation of 60S ribosomal protein L27a on 'His-39'. May play an important role in cell growth and survival. May be involved in ribosome biogenesis, most likely during the assembly process of pre-ribosomal particles. In Bos taurus (Bovine), this protein is Ribosomal oxygenase 2 (RIOX2).